A 320-amino-acid polypeptide reads, in one-letter code: ATP-dependent 6-phosphofructokinase (320 aa).

Residue G12 participates in ATP binding. An ADP-binding site is contributed by 22-26 (RSVIR). Residues 73–74 (RF) and 103–106 (GDGS) contribute to the ATP site. Mg(2+) is bound at residue D104. 126–128 (TID) is a substrate binding site. D128 serves as the catalytic Proton acceptor. Position 155 (R155) interacts with ADP. Substrate-binding positions include R163 and 170–172 (MGR). ADP is bound by residues 186 to 188 (GAE) and 214 to 216 (KRH). Substrate-binding positions include E223, R244, and 250-253 (HIQR).

It belongs to the phosphofructokinase type A (PFKA) family. ATP-dependent PFK group I subfamily. Prokaryotic clade 'B1' sub-subfamily. As to quaternary structure, homotetramer. Requires Mg(2+) as cofactor.

It localises to the cytoplasm. The catalysed reaction is beta-D-fructose 6-phosphate + ATP = beta-D-fructose 1,6-bisphosphate + ADP + H(+). Its pathway is carbohydrate degradation; glycolysis; D-glyceraldehyde 3-phosphate and glycerone phosphate from D-glucose: step 3/4. Its activity is regulated as follows. Allosterically activated by ADP and other diphosphonucleosides, and allosterically inhibited by phosphoenolpyruvate. In terms of biological role, catalyzes the phosphorylation of D-fructose 6-phosphate to fructose 1,6-bisphosphate by ATP, the first committing step of glycolysis. The polypeptide is ATP-dependent 6-phosphofructokinase (Tolumonas auensis (strain DSM 9187 / NBRC 110442 / TA 4)).